The chain runs to 810 residues: Calpain-3 (810 aa).

The segment covering 9–27 (VAQQTAAGSVPSTTSTTTE) has biased composition (low complexity). The segment at 9 to 31 (VAQQTAAGSVPSTTSTTTEGTGG) is disordered. The Calpain catalytic domain maps to 68–410 (LYEDPDFPPN…FTKLEICNLT (343 aa)). Active-site residues include cysteine 123, histidine 327, and asparagine 351. Residues 411–579 (PDTLEADKLQ…KRSLSEEVEN (169 aa)) form a domain III region. The interval 578-639 (ENMIEADRPS…SAKAREKSEE (62 aa)) is disordered. A linker region spans residues 580-638 (MIEADRPSKKKKGKPIIFVSDRANSNKELTTDEDAGKDGEKTHVDEKKRSSAKAREKSE). The span at 613–639 (DAGKDGEKTHVDEKKRSSAKAREKSEE) shows a compositional bias: basic and acidic residues. EF-hand domains are found at residues 638–672 (EEET…VVKK), 681–714 (FELE…DKIK), 711–746 (DKIK…AGFR), and 776–810 (VRLD…TMYA). The tract at residues 639–809 (EETQFRNIFR…VLEWLQLTMY (171 aa)) is domain IV. Residues alanine 651, aspartate 654, glutamate 656, glutamate 661, aspartate 694, aspartate 696, serine 698, lysine 700, glutamate 705, aspartate 724, aspartate 726, serine 728, threonine 730, glutamate 735, aspartate 789, aspartate 791, aspartate 793, and isoleucine 795 each coordinate Ca(2+).

The protein belongs to the peptidase C2 family. Homodimer; via EF-hand domain 4. Interacts with TTN/titin. Interacts with CMYA5; this interaction, which results in CMYA5 proteolysis, may protect CAPN3 from autolysis. Interacts with SIMC1. Interacts with UTP25; the interaction is required for CAPN3 translocation to the nucleolus. As to expression, skeletal muscle. Low levels in spleen, intestine and bone.

The protein localises to the cytoplasm. Its subcellular location is the nucleus. The protein resides in the nucleolus. The enzyme catalyses Broad endopeptidase activity.. Activated by micromolar concentrations of calcium and inhibited by calpastatin. Functionally, calcium-regulated non-lysosomal thiol-protease. Proteolytically cleaves CTBP1. Mediates, with UTP25, the proteasome-independent degradation of p53/TP53. This Gallus gallus (Chicken) protein is Calpain-3 (CAPN3).